A 144-amino-acid polypeptide reads, in one-letter code: D-aminoacyl-tRNA deacylase (144 aa).

The Gly-cisPro motif, important for rejection of L-amino acids motif lies at 136–137 (GP).

It belongs to the DTD family. Homodimer.

Its subcellular location is the cytoplasm. It carries out the reaction glycyl-tRNA(Ala) + H2O = tRNA(Ala) + glycine + H(+). It catalyses the reaction a D-aminoacyl-tRNA + H2O = a tRNA + a D-alpha-amino acid + H(+). Its function is as follows. An aminoacyl-tRNA editing enzyme that deacylates mischarged D-aminoacyl-tRNAs. Also deacylates mischarged glycyl-tRNA(Ala), protecting cells against glycine mischarging by AlaRS. Acts via tRNA-based rather than protein-based catalysis; rejects L-amino acids rather than detecting D-amino acids in the active site. By recycling D-aminoacyl-tRNA to D-amino acids and free tRNA molecules, this enzyme counteracts the toxicity associated with the formation of D-aminoacyl-tRNA entities in vivo and helps enforce protein L-homochirality. The sequence is that of D-aminoacyl-tRNA deacylase from Vibrio atlanticus (strain LGP32) (Vibrio splendidus (strain Mel32)).